The chain runs to 260 residues: 14-3-3 protein 4 (260 aa).

The segment at D238–Q260 is disordered. The span at D245–Q260 shows a compositional bias: basic and acidic residues.

The protein belongs to the 14-3-3 family. As to quaternary structure, homodimer.

The polypeptide is 14-3-3 protein 4 (TFT4) (Solanum lycopersicum (Tomato)).